Consider the following 449-residue polypeptide: Delta(8)-fatty-acid desaturase 2 (449 aa).

One can recognise a Cytochrome b5 heme-binding domain in the interval 7–91 (KRYVTSEDLK…VRDHHVSDVS (85 aa)). Heme contacts are provided by His-42 and His-65. The next 2 helical transmembrane spans lie at 113–133 (VTLY…YGVL) and 138–158 (IWAH…SAYV). The short motif at 160 to 164 (HDSGH) is the Histidine box-1 element. Residues 176-196 (LIQLLSGNCLTGISIAWWKWT) form a helical membrane-spanning segment. The Histidine box-2 signature appears at 197–201 (HNAHH). Helical transmembrane passes span 255 to 275 (FYPV…LLLF), 284 to 304 (ALNI…VSFL), and 311 to 331 (FIFV…FCLN). The Histidine box-3 motif lies at 374 to 378 (QLEHH).

The protein belongs to the fatty acid desaturase type 1 family. Fe cation is required as a cofactor. In terms of tissue distribution, highly expressed in flowers and siliques. Expressed at low levels in roots, leaves and stems.

It localises to the endoplasmic reticulum membrane. It carries out the reaction an N-acyl-(4R)-4-hydroxysphinganine + 2 Fe(II)-[cytochrome b5] + O2 + 2 H(+) = a (4R,8E)-4-hydroxysphingenine ceramide + 2 Fe(III)-[cytochrome b5] + 2 H2O. The catalysed reaction is an N-acyl-(4R)-4-hydroxysphinganine + 2 Fe(II)-[cytochrome b5] + O2 + 2 H(+) = a (4R,8Z)-4-hydroxysphing-8-enine ceramide + 2 Fe(III)-[cytochrome b5] + 2 H2O. In terms of biological role, plays a major role as delta(8)-fatty-acid desaturase which introduces a double bond at the 8-position in the long-chain base (LCB) of ceramides with or without a hydroxy group at the 4-position. The enzyme produces both the 8E and 8Z isomers (in a 4:1 ratio). This structural modification contributes to the quantitative partitioning of ceramides between the two major sphingolipid classes, glucosylceramides and glycosylinositolphosphoryl ceramides. Sphingolipids are important membrane components involved in environmental stress responses, such as resistance to chilling, and act as cell signaling molecules. In Arabidopsis thaliana (Mouse-ear cress), this protein is Delta(8)-fatty-acid desaturase 2 (SLD2).